The primary structure comprises 188 residues: CyanoP (188 aa).

Positions Met-1 to Ala-23 are cleaved as a signal peptide. Cys-24 carries N-palmitoyl cysteine lipidation. Cys-24 is lipidated: S-diacylglycerol cysteine.

Belongs to the PsbP family. CyanoP subfamily. Monomer. Present in about 3% of photosystem II (PSII) preparations. Purifies with partially assembled PSII complexes, in addition to a small amount of monomeric and dimeric PSII, and trimeric PSI.

It is found in the cellular thylakoid membrane. In terms of biological role, plays a role in the early stages of photosystem II (PSII) assembly; binds to D2 (psbD) and may facilitate its incorporation into PSII. Required for optimal photoautotrophic growth in the absence of Ca(2+) or Cl(-), functions in optimizing PSII water oxidation/O(2) evolving activity. Might be involved in assembly of the oxygen evolving complex. This is CyanoP from Synechocystis sp. (strain ATCC 27184 / PCC 6803 / Kazusa).